The following is a 142-amino-acid chain: Large ribosomal subunit protein uL13 (142 aa).

This sequence belongs to the universal ribosomal protein uL13 family. Part of the 50S ribosomal subunit.

In terms of biological role, this protein is one of the early assembly proteins of the 50S ribosomal subunit, although it is not seen to bind rRNA by itself. It is important during the early stages of 50S assembly. The chain is Large ribosomal subunit protein uL13 from Lachnospira eligens (strain ATCC 27750 / DSM 3376 / VPI C15-48 / C15-B4) (Eubacterium eligens).